Reading from the N-terminus, the 31-residue chain is Cytochrome b6-f complex subunit 6 (31 aa).

The helical transmembrane segment at 4–24 (ITSYFGFLLAALTITSALLIG) threads the bilayer.

Belongs to the PetL family. In terms of assembly, the 4 large subunits of the cytochrome b6-f complex are cytochrome b6, subunit IV (17 kDa polypeptide, PetD), cytochrome f and the Rieske protein, while the 4 small subunits are PetG, PetL, PetM and PetN. The complex functions as a dimer.

Its subcellular location is the plastid. The protein resides in the chloroplast thylakoid membrane. Its function is as follows. Component of the cytochrome b6-f complex, which mediates electron transfer between photosystem II (PSII) and photosystem I (PSI), cyclic electron flow around PSI, and state transitions. PetL is important for photoautotrophic growth as well as for electron transfer efficiency and stability of the cytochrome b6-f complex. This chain is Cytochrome b6-f complex subunit 6, found in Magnolia grandiflora (Southern magnolia).